The chain runs to 364 residues: Putative F-box/kelch-repeat protein At1g12170 (364 aa).

Residues 1 to 50 form the F-box domain; sequence MMHVILPWELVEEILYRVPPLSLTRFKIVCKQWNTLFKSKSFVNNHLVRV. 2 Kelch repeats span residues 156 to 205 and 328 to 364; these read SIYN…LNGN and CVYI…IPVP.

This chain is Putative F-box/kelch-repeat protein At1g12170, found in Arabidopsis thaliana (Mouse-ear cress).